The primary structure comprises 514 residues: Maturase K (514 aa).

The protein belongs to the intron maturase 2 family. MatK subfamily.

The protein localises to the plastid. The protein resides in the chloroplast. Its function is as follows. Usually encoded in the trnK tRNA gene intron. Probably assists in splicing its own and other chloroplast group II introns. This chain is Maturase K, found in Tsuga canadensis (Eastern hemlock).